The chain runs to 126 residues: MSNITPGELIPADKPVEINADRETTSVTVENTGDRPSQVGSHFHFFETNPALSFDRKSAYGMRLDIPAGTAIRFEPGCEKDVDLVAIGGDRIVKGMGGLVNGELDADETREQAFERARNADYMEEQ.

The protein belongs to the urease beta subunit family. Heterotrimer of UreA (gamma), UreB (beta) and UreC (alpha) subunits. Three heterotrimers associate to form the active enzyme.

The protein localises to the cytoplasm. The catalysed reaction is urea + 2 H2O + H(+) = hydrogencarbonate + 2 NH4(+). It functions in the pathway nitrogen metabolism; urea degradation; CO(2) and NH(3) from urea (urease route): step 1/1. This is Urease subunit beta from Haloquadratum walsbyi (strain DSM 16790 / HBSQ001).